Consider the following 108-residue polypeptide: Alkyltransferase-like protein 1 (108 aa).

The protein belongs to the MGMT family. ATL subfamily.

Involved in DNA damage recognition. Binds DNA containing O(6)-methylguanine and larger O(6)-alkylguanine adducts. The DNA is bent, the damaged base is rotated out of the DNA duplex into a hydrophobic binding pocket (nucleotide flipping), with Arg-39 donating a hydrogen bond to the orphaned cytosine to stabilize the extrahelical DNA conformation. This structural change in DNA presents the lesion to the nucleotide excision repair (NER) pathway. The affinity for O(6)-alkylguanine adducts increases with the size of the alkyl group. Low affinity small O(6)-alkylguanines are directed to the global genome repair pathway of NER via rhp7-rhp16 and rhp41-rhp23, while strong binding to bulky O(6)-alkylguanines stalls the transcription machinery and diverts the damage to the transcription-coupled repair pathway of NER via rhp26. The chain is Alkyltransferase-like protein 1 from Schizosaccharomyces pombe (strain 972 / ATCC 24843) (Fission yeast).